The following is a 444-amino-acid chain: Putative F-box protein At1g64540 (444 aa).

The 47-residue stretch at 4 to 50 (REFISNLPDEILGKILSLLPTKLGVSTSVLSKRWRNLILLVDNFDLE) folds into the F-box domain.

The polypeptide is Putative F-box protein At1g64540 (Arabidopsis thaliana (Mouse-ear cress)).